We begin with the raw amino-acid sequence, 581 residues long: Multidrug resistance-like ATP-binding protein MdlA (581 aa).

The ABC transmembrane type-1 domain maps to 18–303; it reads YLGSIILLII…LAWMFNIVER (286 aa). 6 helical membrane-spanning segments follow: residues 23 to 43, 53 to 73, 127 to 149, 153 to 175, 247 to 267, and 280 to 300; these read ILLI…GILI, GFEI…VYIL, VVFA…ISVL, ITQI…AILI, VIYL…GWLV, and FIMY…MFNI. The ABC transporter domain maps to 337–571; it reads INIDMFFYPK…KNWYKSMYDH (235 aa). Position 369-376 (369-376) interacts with ATP; that stretch reads GPTGAGKS.

It belongs to the ABC transporter superfamily. Drug exporter-2 (TC 3.A.1.117) family.

It localises to the cell membrane. It carries out the reaction ATP + H2O + xenobioticSide 1 = ADP + phosphate + xenobioticSide 2.. This is Multidrug resistance-like ATP-binding protein MdlA (mdlA) from Buchnera aphidicola subsp. Schizaphis graminum (strain Sg).